We begin with the raw amino-acid sequence, 206 residues long: Ribosomal RNA small subunit methyltransferase G (206 aa).

Residues Gly-73, Leu-78, Val-124 to Glu-125, and Arg-139 contribute to the S-adenosyl-L-methionine site.

The protein belongs to the methyltransferase superfamily. RNA methyltransferase RsmG family.

It is found in the cytoplasm. It catalyses the reaction guanosine(527) in 16S rRNA + S-adenosyl-L-methionine = N(7)-methylguanosine(527) in 16S rRNA + S-adenosyl-L-homocysteine. Functionally, specifically methylates the N7 position of guanine in position 527 of 16S rRNA. The protein is Ribosomal RNA small subunit methyltransferase G of Pectobacterium carotovorum subsp. carotovorum (strain PC1).